The following is a 273-amino-acid chain: Protein INAPERTURATE POLLEN1 (273 aa).

One can recognise a DOG1 domain in the interval 12–267; the sequence is SRRFNDFYED…KDQILLQDFE (256 aa).

Expressed only in anthers and in pollen. Not detected in other flower tissues, stems, leaves and siliques.

The protein localises to the cytoplasm. Required for the formation of pollen surface apertures, which arise by restriction of exine deposition at specific sites. The aperture length depends on the INP1 dosage. Does not play a role in specifying the number or position of apertures. Acts in a sporophytic manner. In Arabidopsis thaliana (Mouse-ear cress), this protein is Protein INAPERTURATE POLLEN1.